The chain runs to 267 residues: Apolipoprotein A-I (267 aa).

The first 18 residues, 1 to 18 (MKAAVLTLAVLFLTGSQA), serve as a signal peptide directing secretion. Repeat copies occupy residues 68–89 (LKLLDNWDSVTSTFSKLREQLG) and 90–111 (PVTQEFWDNLEKETEGLRQEMS). Positions 68–267 (LKLLDNWDSV…EEYTKKLNTQ (200 aa)) are 10 X approximate tandem repeats. Methionine 110 carries the methionine sulfoxide modification. Residues 112-122 (KDLEEVKAKVQ) form a 3; half-length repeat. A run of 5 repeats spans residues 123–144 (PYLDDFQKKWQEEMELYRQKVE), 145–166 (PLRAELQEGARQKLHELQEKLS), 167–188 (PLGEEMRDRARAHVDALRTHLA), 189–210 (PYSDELRQRLAARLEALKENGG), and 211–232 (ARLAEYHAKATEHLSTLSEKAK). Methionine 136 is modified (methionine sulfoxide). The 9; half-length repeat unit spans residues 233 to 243 (PALEDLRQGLL). Residues 244–267 (PVLESFKVSFLSALEEYTKKLNTQ) form repeat 10.

The protein belongs to the apolipoprotein A1/A4/E family. In terms of assembly, homodimer. Interacts with APOA1BP and CLU. Component of a sperm activating protein complex (SPAP), consisting of APOA1, an immunoglobulin heavy chain, an immunoglobulin light chain and albumin. Interacts with NDRG1. Interacts with SCGB3A2. Interacts with NAXE and YJEFN3. Glycosylated. In terms of processing, palmitoylated. Post-translationally, phosphorylation sites are present in the extracellular medium. In terms of tissue distribution, major protein of plasma HDL, also found in chylomicrons.

The protein resides in the secreted. Functionally, participates in the reverse transport of cholesterol from tissues to the liver for excretion by promoting cholesterol efflux from tissues and by acting as a cofactor for the lecithin cholesterol acyltransferase (LCAT). As part of the SPAP complex, activates spermatozoa motility. The sequence is that of Apolipoprotein A-I (APOA1) from Pan troglodytes (Chimpanzee).